We begin with the raw amino-acid sequence, 601 residues long: ATP-dependent lipid A-core flippase (601 aa).

A run of 4 helical transmembrane segments spans residues 26 to 46, 82 to 102, 167 to 187, and 263 to 283; these read VGLF…QPML, LMIV…NYFL, VFLF…MVAI, and VYTP…LFLV. The ABC transmembrane type-1 domain occupies 30 to 321; that stretch reads AVSILGYVIF…LSEVSSTIQR (292 aa). The ABC transporter domain occupies 353–589; the sequence is IEVRDLSFRY…GGHYARLHAM (237 aa). 387–394 lines the ATP pocket; that stretch reads GRSGSGKS.

The protein belongs to the ABC transporter superfamily. Lipid exporter (TC 3.A.1.106) family. Homodimer.

The protein localises to the cell inner membrane. The catalysed reaction is ATP + H2O + lipid A-core oligosaccharideSide 1 = ADP + phosphate + lipid A-core oligosaccharideSide 2.. Its function is as follows. Involved in lipopolysaccharide (LPS) biosynthesis. Translocates lipid A-core from the inner to the outer leaflet of the inner membrane. Transmembrane domains (TMD) form a pore in the inner membrane and the ATP-binding domain (NBD) is responsible for energy generation. This is ATP-dependent lipid A-core flippase from Aromatoleum aromaticum (strain DSM 19018 / LMG 30748 / EbN1) (Azoarcus sp. (strain EbN1)).